Here is a 268-residue protein sequence, read N- to C-terminus: Probable ribosomal RNA small subunit methyltransferase A (268 aa).

S-adenosyl-L-methionine contacts are provided by H23, L25, G50, E71, D95, and N110.

This sequence belongs to the class I-like SAM-binding methyltransferase superfamily. rRNA adenine N(6)-methyltransferase family. RsmA subfamily.

It is found in the cytoplasm. In terms of biological role, specifically dimethylates two adjacent adenosines in the loop of a conserved hairpin near the 3'-end of 16S rRNA in the 30S particle. May play a critical role in biogenesis of 30S subunits. The protein is Probable ribosomal RNA small subunit methyltransferase A of Pyrococcus horikoshii (strain ATCC 700860 / DSM 12428 / JCM 9974 / NBRC 100139 / OT-3).